A 385-amino-acid polypeptide reads, in one-letter code: Succinyl-diaminopimelate desuccinylase (385 aa).

His73 lines the Zn(2+) pocket. Asp75 is an active-site residue. Asp106 is a binding site for Zn(2+). Glu141 functions as the Proton acceptor in the catalytic mechanism. Residues Glu142, Glu170, and His359 each contribute to the Zn(2+) site.

Belongs to the peptidase M20A family. DapE subfamily. Homodimer. The cofactor is Zn(2+). Co(2+) serves as cofactor.

The catalysed reaction is N-succinyl-(2S,6S)-2,6-diaminopimelate + H2O = (2S,6S)-2,6-diaminopimelate + succinate. It participates in amino-acid biosynthesis; L-lysine biosynthesis via DAP pathway; LL-2,6-diaminopimelate from (S)-tetrahydrodipicolinate (succinylase route): step 3/3. Functionally, catalyzes the hydrolysis of N-succinyl-L,L-diaminopimelic acid (SDAP), forming succinate and LL-2,6-diaminopimelate (DAP), an intermediate involved in the bacterial biosynthesis of lysine and meso-diaminopimelic acid, an essential component of bacterial cell walls. The protein is Succinyl-diaminopimelate desuccinylase of Methylorubrum extorquens (strain CM4 / NCIMB 13688) (Methylobacterium extorquens).